The following is a 331-amino-acid chain: Bifunctional nuclease (331 aa).

Residues 126–261 (CVQNNPRVLR…RIAYNNGLKV (136 aa)) enclose the BFN domain. Residues 291–326 (EAQEFDLVRNMLVAAVEERYKDAAQYRDQLFMFRAK) form the UVR domain.

Belongs to the bifunctional nuclease family.

It localises to the nucleus. Its function is as follows. Bifunctional nuclease with both RNase and DNase activities. Involved in basal defense response. Participates in abscisic acid-derived callose deposition following infection by a necrotrophic pathogen. The sequence is that of Bifunctional nuclease (BBD) from Oryza minuta.